Consider the following 77-residue polypeptide: MAVDVPTSVIVKLMFFTLAMVSFPVLTFFVSQQYTSNTLVNGGLAALAANVVLFAYVIMAFSEDVPQSDGKESKKQQ.

Topologically, residues 1-8 (MAVDVPTS) are cytoplasmic. The helical transmembrane segment at 9–29 (VIVKLMFFTLAMVSFPVLTFF) threads the bilayer. The Lumenal portion of the chain corresponds to 30–41 (VSQQYTSNTLVN). The chain crosses the membrane as a helical span at residues 42 to 62 (GGLAALAANVVLFAYVIMAFS). Over 63 to 77 (EDVPQSDGKESKKQQ) the chain is Cytoplasmic. The Prevents secretion from ER signature appears at 74 to 77 (KKQQ).

The protein belongs to the VMA21 family.

The protein resides in the endoplasmic reticulum membrane. It localises to the endoplasmic reticulum-Golgi intermediate compartment membrane. Its subcellular location is the cytoplasmic vesicle. It is found in the COPII-coated vesicle membrane. Its function is as follows. Required for the assembly of the V0 complex of the vacuolar ATPase (V-ATPase) in the endoplasmic reticulum. The protein is Vacuolar ATPase assembly integral membrane protein VMA21 of Eremothecium gossypii (strain ATCC 10895 / CBS 109.51 / FGSC 9923 / NRRL Y-1056) (Yeast).